A 204-amino-acid polypeptide reads, in one-letter code: Lysozyme G (204 aa).

The signal sequence occupies residues M1–S19. 2 disulfides stabilise this stretch: C23-C79 and C37-C48. Active-site residues include E92 and D105.

This sequence belongs to the glycosyl hydrolase 23 family.

The protein localises to the secreted. It carries out the reaction Hydrolysis of (1-&gt;4)-beta-linkages between N-acetylmuramic acid and N-acetyl-D-glucosamine residues in a peptidoglycan and between N-acetyl-D-glucosamine residues in chitodextrins.. In terms of biological role, has bacteriolytic activity against M.luteus. This chain is Lysozyme G, found in Dromaius novaehollandiae (Emu).